A 126-amino-acid chain; its full sequence is Small ribosomal subunit protein bS6 (126 aa).

Residues 103 to 126 (LKAKDERKAPEALVEEVEAEDADE) are disordered. Residues 115-126 (LVEEVEAEDADE) are compositionally biased toward acidic residues.

The protein belongs to the bacterial ribosomal protein bS6 family.

Functionally, binds together with bS18 to 16S ribosomal RNA. This Glaesserella parasuis serovar 5 (strain SH0165) (Haemophilus parasuis) protein is Small ribosomal subunit protein bS6.